Consider the following 379-residue polypeptide: Cytochrome b (379 aa).

4 consecutive transmembrane segments (helical) span residues phenylalanine 33 to methionine 53, tryptophan 77 to valine 98, tryptophan 113 to leucine 133, and phenylalanine 178 to leucine 198. Residues histidine 83 and histidine 97 each contribute to the heme b site. Heme b contacts are provided by histidine 182 and histidine 196. Histidine 201 contributes to the a ubiquinone binding site. 4 consecutive transmembrane segments (helical) span residues threonine 226–tyrosine 246, leucine 288–glutamine 308, leucine 320–glycine 340, and phenylalanine 347–proline 367.

The protein belongs to the cytochrome b family. The cytochrome bc1 complex contains 11 subunits: 3 respiratory subunits (MT-CYB, CYC1 and UQCRFS1), 2 core proteins (UQCRC1 and UQCRC2) and 6 low-molecular weight proteins (UQCRH/QCR6, UQCRB/QCR7, UQCRQ/QCR8, UQCR10/QCR9, UQCR11/QCR10 and a cleavage product of UQCRFS1). This cytochrome bc1 complex then forms a dimer. Heme b serves as cofactor.

Its subcellular location is the mitochondrion inner membrane. In terms of biological role, component of the ubiquinol-cytochrome c reductase complex (complex III or cytochrome b-c1 complex) that is part of the mitochondrial respiratory chain. The b-c1 complex mediates electron transfer from ubiquinol to cytochrome c. Contributes to the generation of a proton gradient across the mitochondrial membrane that is then used for ATP synthesis. The chain is Cytochrome b (MT-CYB) from Lepilemur aeeclis (Sportive lemur).